The chain runs to 312 residues: Olfactory receptor 51A7 (312 aa).

Over M1–I25 the chain is Extracellular. N-linked (GlcNAc...) asparagine glycosylation occurs at N5. Residues W26–L46 traverse the membrane as a helical segment. The Cytoplasmic portion of the chain corresponds to F47–S54. The chain crosses the membrane as a helical span at residues L55–L75. The Extracellular portion of the chain corresponds to S76–A99. A disulfide bridge connects residues C97 and C189. The helical transmembrane segment at Q100 to L120 threads the bilayer. The Cytoplasmic segment spans residues D121–N139. Residues R140–P160 form a helical membrane-spanning segment. At F161–V196 the chain is on the extracellular side. The N-linked (GlcNAc...) asparagine glycan is linked to N192. Residues I197 to S216 traverse the membrane as a helical segment. The Cytoplasmic segment spans residues Y217–A236. A helical transmembrane segment spans residues L237–L257. Topologically, residues A258–V272 are extracellular. A helical transmembrane segment spans residues I273 to V293. At K294–R312 the chain is on the cytoplasmic side.

It belongs to the G-protein coupled receptor 1 family.

It localises to the cell membrane. Odorant receptor. This is Olfactory receptor 51A7 (OR51A7) from Homo sapiens (Human).